The chain runs to 118 residues: Large ribosomal subunit protein uL18 (118 aa).

It belongs to the universal ribosomal protein uL18 family. Part of the 50S ribosomal subunit; part of the 5S rRNA/L5/L18/L25 subcomplex. Contacts the 5S and 23S rRNAs.

In terms of biological role, this is one of the proteins that bind and probably mediate the attachment of the 5S RNA into the large ribosomal subunit, where it forms part of the central protuberance. The chain is Large ribosomal subunit protein uL18 from Rickettsia canadensis (strain McKiel).